The chain runs to 407 residues: L-cysteine:1D-myo-inositol 2-amino-2-deoxy-alpha-D-glucopyranoside ligase (407 aa).

C43 contributes to the Zn(2+) binding site. L-cysteinyl-5'-AMP contacts are provided by residues 43 to 46 (CGIT), T58, and 81 to 83 (NAT). Residues 45-55 (ITPYDATHLGH) carry the 'HIGH' region motif. A 'ERGGDP' region motif is present at residues 183 to 188 (QRGGDP). W223 serves as a coordination point for L-cysteinyl-5'-AMP. C227 lines the Zn(2+) pocket. 245–247 (GSD) provides a ligand contact to L-cysteinyl-5'-AMP. Position 252 (H252) interacts with Zn(2+). Position 279 (V279) interacts with L-cysteinyl-5'-AMP. The 'KMSKS' region signature appears at 285 to 289 (KMSKS).

The protein belongs to the class-I aminoacyl-tRNA synthetase family. MshC subfamily. Monomer. The cofactor is Zn(2+).

It carries out the reaction 1D-myo-inositol 2-amino-2-deoxy-alpha-D-glucopyranoside + L-cysteine + ATP = 1D-myo-inositol 2-(L-cysteinylamino)-2-deoxy-alpha-D-glucopyranoside + AMP + diphosphate + H(+). In terms of biological role, catalyzes the ATP-dependent condensation of GlcN-Ins and L-cysteine to form L-Cys-GlcN-Ins. This is L-cysteine:1D-myo-inositol 2-amino-2-deoxy-alpha-D-glucopyranoside ligase from Streptosporangium roseum (strain ATCC 12428 / DSM 43021 / JCM 3005 / KCTC 9067 / NCIMB 10171 / NRRL 2505 / NI 9100).